Consider the following 530-residue polypeptide: GMP synthase [glutamine-hydrolyzing] (530 aa).

One can recognise a Glutamine amidotransferase type-1 domain in the interval threonine 18–asparagine 207. Cysteine 94 functions as the Nucleophile in the catalytic mechanism. Active-site residues include histidine 181 and glutamate 183. The GMPS ATP-PPase domain occupies tryptophan 208–arginine 405. Serine 236–threonine 242 contacts ATP. Positions 309, 467, 522, and 528 each coordinate XMP.

As to quaternary structure, homodimer. The cofactor is Mg(2+).

The protein resides in the cytoplasm. It is found in the cytosol. The catalysed reaction is XMP + L-glutamine + ATP + H2O = GMP + L-glutamate + AMP + diphosphate + 2 H(+). It functions in the pathway purine metabolism; GMP biosynthesis; GMP from XMP (L-Gln route): step 1/1. In terms of biological role, catalyzes the conversion of xanthine monophosphate (XMP) to GMP in the presence of glutamine and ATP through an adenyl-XMP intermediate. In Candida albicans (strain SC5314 / ATCC MYA-2876) (Yeast), this protein is GMP synthase [glutamine-hydrolyzing] (GUA1).